Here is a 211-residue protein sequence, read N- to C-terminus: ATP phosphoribosyltransferase (211 aa).

It belongs to the ATP phosphoribosyltransferase family. Short subfamily. In terms of assembly, heteromultimer composed of HisG and HisZ subunits.

Its subcellular location is the cytoplasm. The catalysed reaction is 1-(5-phospho-beta-D-ribosyl)-ATP + diphosphate = 5-phospho-alpha-D-ribose 1-diphosphate + ATP. Its pathway is amino-acid biosynthesis; L-histidine biosynthesis; L-histidine from 5-phospho-alpha-D-ribose 1-diphosphate: step 1/9. Catalyzes the condensation of ATP and 5-phosphoribose 1-diphosphate to form N'-(5'-phosphoribosyl)-ATP (PR-ATP). Has a crucial role in the pathway because the rate of histidine biosynthesis seems to be controlled primarily by regulation of HisG enzymatic activity. In Bacillus cereus (strain ATCC 14579 / DSM 31 / CCUG 7414 / JCM 2152 / NBRC 15305 / NCIMB 9373 / NCTC 2599 / NRRL B-3711), this protein is ATP phosphoribosyltransferase.